Reading from the N-terminus, the 409-residue chain is Small ribosomal subunit protein mS47 (409 aa).

The N-terminal 26 residues, methionine 1–phenylalanine 26, are a transit peptide targeting the mitochondrion. A disordered region spans residues alanine 388 to phenylalanine 409.

It belongs to the enoyl-CoA hydratase/isomerase family. Mitochondrion-specific ribosomal protein mS47 subfamily. As to quaternary structure, component of the mitochondrial ribosome small subunit.

It localises to the mitochondrion. This chain is Small ribosomal subunit protein mS47, found in Arabidopsis thaliana (Mouse-ear cress).